The chain runs to 382 residues: Anhydro-N-acetylmuramic acid kinase (382 aa).

9-16 provides a ligand contact to ATP; sequence GTSLDGID.

Belongs to the anhydro-N-acetylmuramic acid kinase family.

It carries out the reaction 1,6-anhydro-N-acetyl-beta-muramate + ATP + H2O = N-acetyl-D-muramate 6-phosphate + ADP + H(+). It participates in amino-sugar metabolism; 1,6-anhydro-N-acetylmuramate degradation. It functions in the pathway cell wall biogenesis; peptidoglycan recycling. In terms of biological role, catalyzes the specific phosphorylation of 1,6-anhydro-N-acetylmuramic acid (anhMurNAc) with the simultaneous cleavage of the 1,6-anhydro ring, generating MurNAc-6-P. Is required for the utilization of anhMurNAc either imported from the medium or derived from its own cell wall murein, and thus plays a role in cell wall recycling. The protein is Anhydro-N-acetylmuramic acid kinase of Bacillus cereus (strain Q1).